The following is a 63-amino-acid chain: High-potential iron-sulfur protein (63 aa).

4 residues coordinate [4Fe-4S] cluster: cysteine 23, cysteine 26, cysteine 41, and cysteine 56.

The protein belongs to the high-potential iron-sulfur protein (HiPIP) family. In terms of assembly, homodimer.

In terms of biological role, specific class of high-redox-potential 4Fe-4S ferredoxins. Functions in anaerobic electron transport in most purple and in some other photosynthetic bacteria and in at least one genus (Paracoccus) of halophilic, denitrifying bacteria. This Rhodocyclus tenuis (Rhodospirillum tenue) protein is High-potential iron-sulfur protein (hip).